A 100-amino-acid chain; its full sequence is MELTPREKDKLLIFTAALLAERRRARGLKLNYPETVALITAALMEGARDGKTVAELMSEGTRILGRDEIMEGVPEMISNIQVEVTFPDGTKLITVHNPVV.

It belongs to the urease gamma subunit family. In terms of assembly, heterotrimer of UreA (gamma), UreB (beta) and UreC (alpha) subunits. Three heterotrimers associate to form the active enzyme.

It localises to the cytoplasm. The catalysed reaction is urea + 2 H2O + H(+) = hydrogencarbonate + 2 NH4(+). Its pathway is nitrogen metabolism; urea degradation; CO(2) and NH(3) from urea (urease route): step 1/1. The sequence is that of Urease subunit gamma from Bordetella pertussis (strain Tohama I / ATCC BAA-589 / NCTC 13251).